A 97-amino-acid chain; its full sequence is YcgL domain-containing protein CPS_3517 (97 aa).

The YcgL domain maps to 1-85 (MLCAIYKSAR…PQEDLLKEHK (85 aa)).

In Colwellia psychrerythraea (strain 34H / ATCC BAA-681) (Vibrio psychroerythus), this protein is YcgL domain-containing protein CPS_3517.